A 745-amino-acid polypeptide reads, in one-letter code: ATP-dependent zinc metalloprotease FtsH (745 aa).

The Cytoplasmic portion of the chain corresponds to 1–11; the sequence is MNNRRNGLFRN. A helical membrane pass occupies residues 12-32; that stretch reads SLFYILMFLSLMGIIYFFFGG. Over 33–131 the chain is Extracellular; that stretch reads NSGSQTQNIR…VTAKAEESSG (99 aa). The helical transmembrane segment at 132-152 threads the bilayer; sequence IWVTLLMYIAPVILMLFLFYM. The Cytoplasmic portion of the chain corresponds to 153–745; it reads MMGQAGQGGG…SSQDDTNSQA (593 aa). 227–234 is a binding site for ATP; sequence GPPGTGKT. Zn(2+) is bound at residue His449. Glu450 is an active-site residue. Residues His453 and Asp525 each coordinate Zn(2+). Residues 630 to 673 show a composition bias toward basic and acidic residues; the sequence is MPEKDSNEFPSEKAATFEESKRELERREAEKHAQNQSADDKQAD. The interval 630-745 is disordered; it reads MPEKDSNEFP…SSQDDTNSQA (116 aa). Residues 690-704 show a composition bias toward low complexity; sequence SESDASSEVSADSSV. The span at 705-745 shows a compositional bias: polar residues; that stretch reads NSTANSATESATDSDVATSATGLPNAESATPSSQDDTNSQA.

In the central section; belongs to the AAA ATPase family. This sequence in the C-terminal section; belongs to the peptidase M41 family. In terms of assembly, homohexamer. The cofactor is Zn(2+).

It is found in the cell membrane. Functionally, acts as a processive, ATP-dependent zinc metallopeptidase for both cytoplasmic and membrane proteins. Plays a role in the quality control of integral membrane proteins. This chain is ATP-dependent zinc metalloprotease FtsH, found in Lactiplantibacillus plantarum (strain ATCC BAA-793 / NCIMB 8826 / WCFS1) (Lactobacillus plantarum).